The following is a 396-amino-acid chain: Probable sugar efflux transporter (396 aa).

Residues 1–14 (MTTNTVSRKVAWLR) are Cytoplasmic-facing. A helical transmembrane segment spans residues 15 to 35 (VVTLAVAAFIFNTTEFVPVGL). Over 36 to 49 (LSDIAQSFHMQTAQ) the chain is Periplasmic. A helical transmembrane segment spans residues 50 to 70 (VGIMLTIYAWVVALMSLPFML). The Cytoplasmic segment spans residues 71–80 (MTSQVERRKL). The helical transmembrane segment at 81 to 101 (LICLFVVFIASHVLSFLSWSF) threads the bilayer. Threonine 102 is a topological domain (periplasmic). A helical transmembrane segment spans residues 103-123 (VLVISRIGVAFAHAIFWSITA). Topologically, residues 124–135 (SLAIRMAPAGKR) are cytoplasmic. A helical transmembrane segment spans residues 136 to 156 (AQALSLIATGTALAMVLGLPL). The Periplasmic portion of the chain corresponds to 157–169 (GRIVGQYFGWRMT). The helical transmembrane segment at 170–190 (FFAIGIGALITLLCLIKLLPL) threads the bilayer. The Cytoplasmic portion of the chain corresponds to 191–208 (LPSEHSGSLKSLPLLFRR). The helical transmembrane segment at 209–229 (PALMSIYLLTVVVVTAHYTAY) threads the bilayer. Topologically, residues 230 to 245 (SYIEPFVQNIAGFSAN) are periplasmic. Residues 246 to 266 (FATALLLLLGGAGIIGSVIFG) traverse the membrane as a helical segment. Topologically, residues 267–274 (KLGNQYAS) are cytoplasmic. A helical membrane pass occupies residues 275-295 (ALVSTAIALLLVCLALLLPAA). Residues 296-298 (NSE) are Periplasmic-facing. A helical membrane pass occupies residues 299-319 (IHLGVLSIFWGIAMMIIGLGM). The Cytoplasmic portion of the chain corresponds to 320 to 332 (QVKVLALAPDATD). Residues 333–353 (VAMALFSGIFNIGIGAGALVG) form a helical membrane-spanning segment. Over 354-363 (NQVSLHWSMS) the chain is Periplasmic. A helical transmembrane segment spans residues 364–384 (MIGYVGTVPAFAALIWSIIIF). Over 385–396 (RRWPVTLEEQTQ) the chain is Cytoplasmic.

This sequence belongs to the major facilitator superfamily. SotB (TC 2.A.1.2) family.

The protein resides in the cell inner membrane. Its function is as follows. Involved in the efflux of sugars. The physiological role may be the reduction of the intracellular concentration of toxic sugars or sugar metabolites. This Escherichia coli O157:H7 protein is Probable sugar efflux transporter.